We begin with the raw amino-acid sequence, 211 residues long: Probable septum site-determining protein MinC (211 aa).

The protein belongs to the MinC family. In terms of assembly, interacts with MinD and FtsZ.

Cell division inhibitor that blocks the formation of polar Z ring septums. Rapidly oscillates between the poles of the cell to destabilize FtsZ filaments that have formed before they mature into polar Z rings. Prevents FtsZ polymerization. The polypeptide is Probable septum site-determining protein MinC (Clostridium acetobutylicum (strain ATCC 824 / DSM 792 / JCM 1419 / IAM 19013 / LMG 5710 / NBRC 13948 / NRRL B-527 / VKM B-1787 / 2291 / W)).